Consider the following 619-residue polypeptide: ATP-dependent RNA helicase abstrakt (619 aa).

The segment covering 1–11 (MAHVKRYRRSS) has biased composition (basic residues). 2 disordered regions span residues 1-25 (MAHVKRYRRSSKSSEEGDLDNEDYV) and 50-69 (ETAQPKSSSENENEDDSQGA). A phosphoserine mark is found at Ser11, Ser13, Ser14, Ser56, Ser57, Ser58, and Ser66. Positions 177-205 (RSFREMKFPKGILNGLAAKGIKNPTPIQV) match the Q motif motif. Residues 208-392 (LPTVLAGRDL…RSALVKPVTI (185 aa)) form the Helicase ATP-binding domain. 221–228 (AFTGSGKT) provides a ligand contact to ATP. The DEAD box signature appears at 340–343 (DEAD). The Helicase C-terminal domain maps to 403-563 (NVTQQVEYVK…EVPDFLDELA (161 aa)). The segment at 577–594 (HGCTYCGGLGHRITECPK) adopts a CCHC-type zinc-finger fold.

It belongs to the DEAD box helicase family. DDX41 subfamily.

The protein resides in the nucleus. The enzyme catalyses ATP + H2O = ADP + phosphate + H(+). Functionally, ATP-dependent RNA helicase. Is essential for the directed and fasciculated early outgrowth of the bolwig nerves, as well as for its navigation at later stages. Is required during post-transcriptional gene expression. Plays a role during morphogenetic process, apoptosis and the establishment of cell polarity. The sequence is that of ATP-dependent RNA helicase abstrakt (abs) from Drosophila melanogaster (Fruit fly).